Here is a 1658-residue protein sequence, read N- to C-terminus: Collagen alpha-1(XXVII) chain B (1658 aa).

The N-terminal stretch at 1–38 is a signal peptide; it reads MEPDNTPSSRLRAAGVGGRAVFFCMVLYCTCCLRLAQA. Residues 66-229 form the Laminin G-like domain; it reads GVILTTRARI…NYCKYIKKQC (164 aa). Polar residues predominate over residues 308–323; it reads SIRNRTSQISPKPTQQ. Disordered regions lie at residues 308–332, 345–364, 427–550, 571–614, 637–1332, and 1377–1415; these read SIRNRTSQISPKPTQQNRKKAKKER, VTDSPTSQQQNQVDIPTTTT, GLKG…GNMG, GERG…APGP, GPKG…DAGE, and IIGPSGNPGPQGDKGNKGEMGVQGPRGPPGPRGPPGPPG. A triple-helical region region spans residues 424–1417; that stretch reads ELTGLKGEPG…RGPPGPPGLP (994 aa). Collagen-like domains follow at residues 425 to 478, 493 to 552, 556 to 615, 622 to 681, 685 to 744, 748 to 807, and 811 to 870; these read LTGL…GNPG, GLVG…MGPK, GFIG…PGPV, GDMG…PGLP, GKPG…PGLE, GPVG…MGLA, and GDRG…RGPD. Residues 434 to 444 show a composition bias toward pro residues; it reads LPGPPGPPGQP. A compositionally biased stretch (low complexity) spans 491-506; sequence DPGLVGLPGQPGQPGR. 2 stretches are compositionally biased toward low complexity: residues 657 to 666 and 678 to 692; these read LGLPGEPGEP and PGLPGVQGKPGPQGK. Over residues 733–742 the composition is skewed to gly residues; the sequence is GIPGPGGLPG. Composition is skewed to low complexity over residues 837–852 and 875–890; these read RGLSGPAGAPGPHGSR and EKGMMGMKGPEGPPGK. Collagen-like domains lie at 892–951, 952–1011, 1024–1083, 1084–1137, 1139–1198, 1199–1258, 1268–1327, and 1361–1420; these read GLSG…IGLP, GKAG…VGLE, GTEG…IGPK, GSRG…DGKV, GPPG…KGSK, GNKG…PGDL, GKPG…KGQP, and GPQG…PAVA. The span at 1040–1058 shows a compositional bias: basic and acidic residues; sequence PEGKPGKIGERGKPGEKGS. Low complexity predominate over residues 1112–1124; it reads HQGPQGSLGSPGP. Residues 1125 to 1137 show a composition bias toward basic and acidic residues; sequence KGEKGEQGDDGKV. Over residues 1215 to 1230 the composition is skewed to low complexity; the sequence is NRGSPGPVGVPGPRGV. Over residues 1307 to 1316 the composition is skewed to gly residues; sequence GLNGGMGFPG. Residues 1402 to 1415 are compositionally biased toward pro residues; it reads RGPPGPRGPPGPPG. The propeptide at 1421-1658 is C-terminal propeptide; it reads FSHENEALGA…HLEVGPVCFL (238 aa). In terms of domain architecture, Fibrillar collagen NC1 spans 1458–1658; it reads SEIFKTLHYL…HLEVGPVCFL (201 aa). Disulfide bonds link Cys-1488/Cys-1520, Cys-1529/Cys-1656, and Cys-1565/Cys-1609. 4 residues coordinate Ca(2+): Asp-1506, Asn-1508, Cys-1511, and Asp-1514. Asn-1567 is a glycosylation site (N-linked (GlcNAc...) asparagine).

It belongs to the fibrillar collagen family. In terms of tissue distribution, weakly expressed in the notochord from the 6 somite stage. Expressed throughout the notochord at 13 somites, then becomes restricted to the distal tip of the notochord by 24 hpf. Also expressed in head cartilages by 48 hpf.

Its subcellular location is the secreted. It localises to the extracellular space. It is found in the extracellular matrix. Functionally, may play a role during the calcification of cartilage and the transition of cartilage to bone. Together with col27a1a, plays a role in development of the notochord and axial skeleton. This Danio rerio (Zebrafish) protein is Collagen alpha-1(XXVII) chain B (col27a1b).